A 131-amino-acid polypeptide reads, in one-letter code: Glycine cleavage system H protein (131 aa).

In terms of domain architecture, Lipoyl-binding spans 24 to 106 (RAIVGISDHA…YGEGWIMVIE (83 aa)). The residue at position 65 (Lys-65) is an N6-lipoyllysine.

This sequence belongs to the GcvH family. The glycine cleavage system is composed of four proteins: P, T, L and H. (R)-lipoate is required as a cofactor.

In terms of biological role, the glycine cleavage system catalyzes the degradation of glycine. The H protein shuttles the methylamine group of glycine from the P protein to the T protein. The polypeptide is Glycine cleavage system H protein (Xylella fastidiosa (strain M12)).